Reading from the N-terminus, the 632-residue chain is 1-deoxy-D-xylulose-5-phosphate synthase (632 aa).

Thiamine diphosphate is bound by residues His-79 and 120-122 (GHA). Asp-151 provides a ligand contact to Mg(2+). Thiamine diphosphate contacts are provided by residues 152-153 (GS), Asn-180, Phe-292, and Glu-376. Residue Asn-180 coordinates Mg(2+).

It belongs to the transketolase family. DXPS subfamily. In terms of assembly, homodimer. It depends on Mg(2+) as a cofactor. Requires thiamine diphosphate as cofactor.

The enzyme catalyses D-glyceraldehyde 3-phosphate + pyruvate + H(+) = 1-deoxy-D-xylulose 5-phosphate + CO2. Its pathway is metabolic intermediate biosynthesis; 1-deoxy-D-xylulose 5-phosphate biosynthesis; 1-deoxy-D-xylulose 5-phosphate from D-glyceraldehyde 3-phosphate and pyruvate: step 1/1. Catalyzes the acyloin condensation reaction between C atoms 2 and 3 of pyruvate and glyceraldehyde 3-phosphate to yield 1-deoxy-D-xylulose-5-phosphate (DXP). This chain is 1-deoxy-D-xylulose-5-phosphate synthase, found in Azobacteroides pseudotrichonymphae genomovar. CFP2.